The sequence spans 317 residues: Putative HTH-type transcriptional regulatory protein TGAM_1316 (317 aa).

The region spanning 131–189 (LKKLREKHGYSVGELASLLGVSRKSLLNYERNEQAVSLEVALRMEELFDEPIAEPIDVL) is the HTH cro/C1-type domain. The H-T-H motif DNA-binding region spans 142–161 (VGELASLLGVSRKSLLNYER).

The sequence is that of Putative HTH-type transcriptional regulatory protein TGAM_1316 from Thermococcus gammatolerans (strain DSM 15229 / JCM 11827 / EJ3).